A 233-amino-acid chain; its full sequence is N-(5'-phosphoribosyl)anthranilate isomerase (233 aa).

This sequence belongs to the TrpF family.

The catalysed reaction is N-(5-phospho-beta-D-ribosyl)anthranilate = 1-(2-carboxyphenylamino)-1-deoxy-D-ribulose 5-phosphate. The protein operates within amino-acid biosynthesis; L-tryptophan biosynthesis; L-tryptophan from chorismate: step 3/5. This chain is N-(5'-phosphoribosyl)anthranilate isomerase, found in Synechococcus sp. (strain JA-2-3B'a(2-13)) (Cyanobacteria bacterium Yellowstone B-Prime).